A 497-amino-acid polypeptide reads, in one-letter code: Serine/threonine-protein phosphatase 2A 56 kDa regulatory subunit beta isoform (497 aa).

Residues 1–19 (METKLPPASTPTSPSSPGL) show a composition bias toward low complexity. 2 disordered regions span residues 1–55 (METK…YQSN) and 473–497 (QGTQ…GGQS). A phosphoserine mark is found at Ser-32, Ser-35, Ser-44, Ser-46, Ser-47, and Ser-48. The span at 34-45 (RSLRRARPRRSH) shows a compositional bias: basic residues.

It belongs to the phosphatase 2A regulatory subunit B56 family. Component of the serine/threonine-protein phosphatase 2A complex (PP2A). This complex consists of a common heterodimeric core enzyme, composed of a 36 kDa catalytic subunit (subunit C) and a 65 kDa constant scaffold subunit (PR65 or subunit A), that associates with a variety of regulatory subunits. Proteins that associate with the core dimer include three families of regulatory subunits B (the R2/B/PR55/B55, R3/B''/PR72/PR130/PR59 and R5/B'/B56 families), the 48 kDa variable regulatory subunit, viral proteins, and cell signaling molecules. Interacts with SGO1. Interacts with AKT1. Post-translationally, ubiquitinated by CUL3-KLHL15 complex; this modification leads to proteasomal degradation. Widely expressed at the mRNA level, with highest levels in cerebellum and lung.

The protein localises to the cytoplasm. Functionally, as the regulatory component of the serine/threonine-protein phosphatase 2A (PP2A) holoenzyme, modulates substrate specificity, subcellular localization, and responsiveness to phosphorylation. The phosphorylated form mediates the interaction between PP2A and AKT1, leading to AKT1 dephosphorylation. In Rattus norvegicus (Rat), this protein is Serine/threonine-protein phosphatase 2A 56 kDa regulatory subunit beta isoform (Ppp2r5b).